The chain runs to 652 residues: Acetyl-coenzyme A synthetase (652 aa).

CoA contacts are provided by residues 191–194, T311, and N335; that span reads RAGR. ATP-binding positions include 387–389, 411–416, D500, and R515; these read GEP and DTWWQT. S523 is a CoA binding site. Position 526 (R526) interacts with ATP. Positions 537, 539, and 542 each coordinate Mg(2+). A CoA-binding site is contributed by R584. K609 carries the N6-acetyllysine modification.

The protein belongs to the ATP-dependent AMP-binding enzyme family. It depends on Mg(2+) as a cofactor. In terms of processing, acetylated. Deacetylation by the SIR2-homolog deacetylase activates the enzyme.

It catalyses the reaction acetate + ATP + CoA = acetyl-CoA + AMP + diphosphate. Catalyzes the conversion of acetate into acetyl-CoA (AcCoA), an essential intermediate at the junction of anabolic and catabolic pathways. Acs undergoes a two-step reaction. In the first half reaction, Acs combines acetate with ATP to form acetyl-adenylate (AcAMP) intermediate. In the second half reaction, it can then transfer the acetyl group from AcAMP to the sulfhydryl group of CoA, forming the product AcCoA. Its function is as follows. Enables the cell to use acetate during aerobic growth to generate energy via the TCA cycle, and biosynthetic compounds via the glyoxylate shunt. Acetylates CheY, the response regulator involved in flagellar movement and chemotaxis. This Cronobacter sakazakii (strain ATCC BAA-894) (Enterobacter sakazakii) protein is Acetyl-coenzyme A synthetase.